The primary structure comprises 392 residues: Heat-inducible transcription repressor HrcA (392 aa).

Belongs to the HrcA family.

Negative regulator of class I heat shock genes (grpE-dnaK-dnaJ and groELS operons). Prevents heat-shock induction of these operons. This chain is Heat-inducible transcription repressor HrcA, found in Chlamydia muridarum (strain MoPn / Nigg).